Consider the following 273-residue polypeptide: Dermonecrotic toxin LspiSicTox-betaIE1i (273 aa).

Mg(2+) is bound by residues Glu-25 and Asp-27. His-41 functions as the Nucleophile in the catalytic mechanism. Residues Cys-45 and Cys-51 are joined by a disulfide bond. Asp-85 provides a ligand contact to Mg(2+).

Belongs to the arthropod phospholipase D family. Class I subfamily. It depends on Mg(2+) as a cofactor. As to expression, expressed by the venom gland.

It is found in the secreted. The catalysed reaction is an N-(acyl)-sphingosylphosphocholine = an N-(acyl)-sphingosyl-1,3-cyclic phosphate + choline. The enzyme catalyses an N-(acyl)-sphingosylphosphoethanolamine = an N-(acyl)-sphingosyl-1,3-cyclic phosphate + ethanolamine. It catalyses the reaction a 1-acyl-sn-glycero-3-phosphocholine = a 1-acyl-sn-glycero-2,3-cyclic phosphate + choline. It carries out the reaction a 1-acyl-sn-glycero-3-phosphoethanolamine = a 1-acyl-sn-glycero-2,3-cyclic phosphate + ethanolamine. Functionally, dermonecrotic toxins cleave the phosphodiester linkage between the phosphate and headgroup of certain phospholipids (sphingolipid and lysolipid substrates), forming an alcohol (often choline) and a cyclic phosphate. This toxin acts on sphingomyelin (SM). It may also act on ceramide phosphoethanolamine (CPE), lysophosphatidylcholine (LPC) and lysophosphatidylethanolamine (LPE), but not on lysophosphatidylserine (LPS), and lysophosphatidylglycerol (LPG). It acts by transphosphatidylation, releasing exclusively cyclic phosphate products as second products. Induces dermonecrosis, hemolysis, increased vascular permeability, edema, inflammatory response, and platelet aggregation. The protein is Dermonecrotic toxin LspiSicTox-betaIE1i of Loxosceles spinulosa (Recluse spider).